Reading from the N-terminus, the 120-residue chain is A-type ATP synthase subunit F (120 aa).

The protein belongs to the V-ATPase F subunit family. As to quaternary structure, has multiple subunits with at least A(3), B(3), C, D, E, F, H, I and proteolipid K(x).

The protein resides in the cell membrane. Functionally, component of the A-type ATP synthase that produces ATP from ADP in the presence of a proton gradient across the membrane. The polypeptide is A-type ATP synthase subunit F (Halobacterium salinarum (strain ATCC 29341 / DSM 671 / R1)).